Reading from the N-terminus, the 279-residue chain is 1-(5-phosphoribosyl)-5-[(5-phosphoribosylamino)methylideneamino] imidazole-4-carboxamide isomerase (279 aa).

The protein belongs to the HisA/HisF family.

Its subcellular location is the cytoplasm. It carries out the reaction 1-(5-phospho-beta-D-ribosyl)-5-[(5-phospho-beta-D-ribosylamino)methylideneamino]imidazole-4-carboxamide = 5-[(5-phospho-1-deoxy-D-ribulos-1-ylimino)methylamino]-1-(5-phospho-beta-D-ribosyl)imidazole-4-carboxamide. It participates in amino-acid biosynthesis; L-histidine biosynthesis; L-histidine from 5-phospho-alpha-D-ribose 1-diphosphate: step 4/9. This is 1-(5-phosphoribosyl)-5-[(5-phosphoribosylamino)methylideneamino] imidazole-4-carboxamide isomerase (HIS6) from Candida albicans (Yeast).